The primary structure comprises 314 residues: 2,3-dihydroxyphenylpropionate/2,3-dihydroxicinnamic acid 1,2-dioxygenase (314 aa).

His-115 (proton donor) is an active-site residue. His-179 acts as the Proton acceptor in catalysis.

The protein belongs to the LigB/MhpB extradiol dioxygenase family. As to quaternary structure, homotetramer. Fe(2+) is required as a cofactor.

The catalysed reaction is 3-(2,3-dihydroxyphenyl)propanoate + O2 = (2Z,4E)-2-hydroxy-6-oxonona-2,4-dienedioate + H(+). The enzyme catalyses (2E)-3-(2,3-dihydroxyphenyl)prop-2-enoate + O2 = (2Z,4E,7E)-2-hydroxy-6-oxonona-2,4,7-trienedioate + H(+). Its pathway is aromatic compound metabolism; 3-phenylpropanoate degradation. Functionally, catalyzes the non-heme iron(II)-dependent oxidative cleavage of 2,3-dihydroxyphenylpropionic acid and 2,3-dihydroxicinnamic acid into 2-hydroxy-6-ketononadienedioate and 2-hydroxy-6-ketononatrienedioate, respectively. This Rhodococcus jostii (strain RHA1) protein is 2,3-dihydroxyphenylpropionate/2,3-dihydroxicinnamic acid 1,2-dioxygenase.